We begin with the raw amino-acid sequence, 820 residues long: Trimethylamine-N-oxide reductase (820 aa).

The segment at residues 1–33 (MAITRRSFLKGVATTSAASVIGPSLLASASANA) is a signal peptide (tat-type signal). Residue Ser179 coordinates Mo-bis(molybdopterin guanine dinucleotide).

The protein belongs to the prokaryotic molybdopterin-containing oxidoreductase family. The cofactor is Mo-bis(molybdopterin guanine dinucleotide). Post-translationally, predicted to be exported by the Tat system. The position of the signal peptide cleavage has not been experimentally proven.

It localises to the periplasm. It catalyses the reaction trimethylamine + 2 Fe(III)-[cytochrome c] + H2O = trimethylamine N-oxide + 2 Fe(II)-[cytochrome c] + 3 H(+). Its function is as follows. Reduces trimethylamine-N-oxide (TMAO) into trimethylamine; an anaerobic reaction coupled to energy-yielding reactions. This is Trimethylamine-N-oxide reductase (torA) from Vibrio parahaemolyticus serotype O3:K6 (strain RIMD 2210633).